A 284-amino-acid polypeptide reads, in one-letter code: tRNA pseudouridine synthase B (284 aa).

The active-site Nucleophile is the Asp40.

This sequence belongs to the pseudouridine synthase TruB family. Type 1 subfamily.

The catalysed reaction is uridine(55) in tRNA = pseudouridine(55) in tRNA. Functionally, responsible for synthesis of pseudouridine from uracil-55 in the psi GC loop of transfer RNAs. The chain is tRNA pseudouridine synthase B from Helicobacter hepaticus (strain ATCC 51449 / 3B1).